The following is a 378-amino-acid chain: TelA-like protein SAV1406 (378 aa).

It belongs to the TelA family.

The chain is TelA-like protein SAV1406 from Staphylococcus aureus (strain Mu50 / ATCC 700699).